The chain runs to 265 residues: 4-diphosphocytidyl-2-C-methyl-D-erythritol kinase (265 aa).

The active site involves Lys-8. Residue 95–105 (PIGAGLGGGSS) participates in ATP binding. Residue Asp-135 is part of the active site.

The protein belongs to the GHMP kinase family. IspE subfamily.

The catalysed reaction is 4-CDP-2-C-methyl-D-erythritol + ATP = 4-CDP-2-C-methyl-D-erythritol 2-phosphate + ADP + H(+). Its pathway is isoprenoid biosynthesis; isopentenyl diphosphate biosynthesis via DXP pathway; isopentenyl diphosphate from 1-deoxy-D-xylulose 5-phosphate: step 3/6. Its function is as follows. Catalyzes the phosphorylation of the position 2 hydroxy group of 4-diphosphocytidyl-2C-methyl-D-erythritol. This chain is 4-diphosphocytidyl-2-C-methyl-D-erythritol kinase, found in Ureaplasma parvum serovar 3 (strain ATCC 27815 / 27 / NCTC 11736).